A 501-amino-acid chain; its full sequence is Suppressor of hairless protein homolog (501 aa).

3 DNA-binding regions span residues Gln-58 to Phe-68, Ser-166 to Lys-171, and Arg-193 to Thr-198. Positions Pro-356–Thr-446 constitute an IPT/TIG domain.

The protein belongs to the Su(H) family. Interacts with activated Notch proteins. Forms a ternary complex with nrarp and the intracellular domain (NICD) of notch1. Interacts with rita1, leading to nuclear export, prevent the interaction between rbpj and NICD product and subsequent down-regulation of the Notch signaling pathway.

It is found in the nucleus. It localises to the cytoplasm. Transcriptional regulator that plays a central role in Notch signaling, a signaling pathway involved in cell-cell communication that regulates a broad spectrum of cell-fate determinations. Acts as a transcriptional repressor when it is not associated with Notch proteins. When associated with some NICD product of Notch proteins (Notch intracellular domain), it acts as a transcriptional activator that activates transcription of Notch target genes. Required for the transcriptional activation of ESR1, suggesting that it is required during primary neurogenesis in embryos. Binds to the oxygen responsive element of COX4I2 and activates its transcription under hypoxia conditions (4% oxygen). This Xenopus laevis (African clawed frog) protein is Suppressor of hairless protein homolog (rbpj).